A 356-amino-acid chain; its full sequence is D-alanine--D-alanine ligase (356 aa).

In terms of domain architecture, ATP-grasp spans 134–339 (KQLFAHRGLP…YSDLIKKLIE (206 aa)). 167-222 (HDKLEYPVFVKPANLGSSVGISKCNNEEELKNGIEEAFQFDRKLVIEQGIEAREIE) serves as a coordination point for ATP. Positions 293, 306, and 308 each coordinate Mg(2+).

The protein belongs to the D-alanine--D-alanine ligase family. Mg(2+) serves as cofactor. The cofactor is Mn(2+).

Its subcellular location is the cytoplasm. It catalyses the reaction 2 D-alanine + ATP = D-alanyl-D-alanine + ADP + phosphate + H(+). It functions in the pathway cell wall biogenesis; peptidoglycan biosynthesis. Its function is as follows. Cell wall formation. This chain is D-alanine--D-alanine ligase, found in Staphylococcus saprophyticus subsp. saprophyticus (strain ATCC 15305 / DSM 20229 / NCIMB 8711 / NCTC 7292 / S-41).